Consider the following 81-residue polypeptide: ATP synthase subunit c, chloroplastic (81 aa).

The next 2 membrane-spanning stretches (helical) occupy residues 3 to 23 (PLVFAASVIAAGLAVGLASIG) and 57 to 77 (LAFMEALTIYGLVVALALLFA).

Belongs to the ATPase C chain family. In terms of assembly, F-type ATPases have 2 components, F(1) - the catalytic core - and F(0) - the membrane proton channel. F(1) has five subunits: alpha(3), beta(3), gamma(1), delta(1), epsilon(1). F(0) has four main subunits: a(1), b(1), b'(1) and c(10-14). The alpha and beta chains form an alternating ring which encloses part of the gamma chain. F(1) is attached to F(0) by a central stalk formed by the gamma and epsilon chains, while a peripheral stalk is formed by the delta, b and b' chains.

The protein localises to the plastid. It localises to the chloroplast thylakoid membrane. Functionally, f(1)F(0) ATP synthase produces ATP from ADP in the presence of a proton or sodium gradient. F-type ATPases consist of two structural domains, F(1) containing the extramembraneous catalytic core and F(0) containing the membrane proton channel, linked together by a central stalk and a peripheral stalk. During catalysis, ATP synthesis in the catalytic domain of F(1) is coupled via a rotary mechanism of the central stalk subunits to proton translocation. Key component of the F(0) channel; it plays a direct role in translocation across the membrane. A homomeric c-ring of between 10-14 subunits forms the central stalk rotor element with the F(1) delta and epsilon subunits. The polypeptide is ATP synthase subunit c, chloroplastic (Atropa belladonna (Belladonna)).